The following is a 239-amino-acid chain: Lactate utilization protein A (239 aa).

This sequence belongs to the LutA/YkgE family.

Functionally, is involved in L-lactate degradation and allows cells to grow with lactate as the sole carbon source. The protein is Lactate utilization protein A of Geobacillus thermodenitrificans (strain NG80-2).